Here is a 292-residue protein sequence, read N- to C-terminus: uncharacterized protein (292 aa).

Belongs to the glycosyltransferase 2 family. WaaE/KdtX subfamily.

This is an uncharacterized protein from Rickettsia typhi (strain ATCC VR-144 / Wilmington).